The primary structure comprises 396 residues: MAMIEVGFERQNFYPLKRKSALLLKLIAVVFAVLLFCEFLIYYLAIFQCNWPEVKTTAYDGEQASHEPVLKAMFLADTHLLGEFLGHWLDKLRREWQMERALQTALWLLQPEVVFILGDVFDEGKWSTPEAWADDVERFQKMFRHPSHVQLKVVAGNHDIGFHYEMNTYKVERFEKVFSSERLFSWKGINFVMVNSVAMNGDGCGICSEAEAELIEVSHRLNCSREARGSRRCGPGPLLPVSAPVLLQHYPLYRRSDANCSGDDAAPPEERDIPFKENYDVLSREASQKLLWWLQPRLVLSGHTHSACEVHHGGRVPEFSVPSFSWRNRNNPSFIMGSITPTDYALSKCYLPREDVVLVIYCGAVGFLVVLTLSHLGLLASPFLSGLNLLRKRKTR.

The chain crosses the membrane as a helical span at residues 27–47 (IAVVFAVLLFCEFLIYYLAIF). A divalent metal cation contacts are provided by Asp77, Asp119, Asn157, His249, His303, and His305. A helical membrane pass occupies residues 356 to 376 (VVLVIYCGAVGFLVVLTLSHL). Positions 392 to 396 (KRKTR) match the Di-lysine motif motif.

Belongs to the metallophosphoesterase superfamily. MPPE1 family. As to quaternary structure, interacts with GPI-anchor proteins (via the GPI portion). Interacts with TMED10. It depends on Mn(2+) as a cofactor.

The protein resides in the endoplasmic reticulum-Golgi intermediate compartment membrane. Metallophosphoesterase that catalyzes the removal of a side-chain ethanolamine-phosphate (EtNP) from the second mannose of the GPI-anchor protein intermediate. Participates in the glycan remodeling steps of GPI-anchor maturation to allow an efficient transport of GPI-anchor proteins from the endoplasmic reticulum to the Golgi. This chain is Metallophosphoesterase 1, found in Macaca fascicularis (Crab-eating macaque).